We begin with the raw amino-acid sequence, 401 residues long: Argininosuccinate synthase (401 aa).

Residues 10–18 and A38 each bind ATP; that span reads AYSGGVDTS. Y89 lines the L-citrulline pocket. G119 contacts ATP. L-aspartate-binding residues include T121, N125, and D126. N125 contributes to the L-citrulline binding site. 5 residues coordinate L-citrulline: R129, S177, S186, E262, and Y274.

Belongs to the argininosuccinate synthase family. Type 1 subfamily. In terms of assembly, homotetramer.

The protein resides in the cytoplasm. The catalysed reaction is L-citrulline + L-aspartate + ATP = 2-(N(omega)-L-arginino)succinate + AMP + diphosphate + H(+). Its pathway is amino-acid biosynthesis; L-arginine biosynthesis; L-arginine from L-ornithine and carbamoyl phosphate: step 2/3. The sequence is that of Argininosuccinate synthase from Synechococcus sp. (strain WH7803).